A 188-amino-acid polypeptide reads, in one-letter code: Elongation factor P (188 aa).

This sequence belongs to the elongation factor P family.

The protein resides in the cytoplasm. The protein operates within protein biosynthesis; polypeptide chain elongation. Functionally, involved in peptide bond synthesis. Stimulates efficient translation and peptide-bond synthesis on native or reconstituted 70S ribosomes in vitro. Probably functions indirectly by altering the affinity of the ribosome for aminoacyl-tRNA, thus increasing their reactivity as acceptors for peptidyl transferase. The sequence is that of Elongation factor P from Rhodopseudomonas palustris (strain TIE-1).